The sequence spans 442 residues: tRNA-2-methylthio-N(6)-dimethylallyladenosine synthase (442 aa).

The 116-residue stretch at 2–117 folds into the MTTase N-terminal domain; the sequence is KSLYIKTYGC…LPELIVKASR (116 aa). Cysteine 11, cysteine 47, cysteine 80, cysteine 157, cysteine 161, and cysteine 164 together coordinate [4Fe-4S] cluster. The 232-residue stretch at 143-374 folds into the Radical SAM core domain; the sequence is NSQGSSAFLS…QKLINKQQLE (232 aa). The TRAM domain maps to 377 to 441; it reads QSMVGKTIPV…QNSLLGRELQ (65 aa).

Belongs to the methylthiotransferase family. MiaB subfamily. In terms of assembly, monomer. [4Fe-4S] cluster serves as cofactor.

The protein localises to the cytoplasm. It carries out the reaction N(6)-dimethylallyladenosine(37) in tRNA + (sulfur carrier)-SH + AH2 + 2 S-adenosyl-L-methionine = 2-methylsulfanyl-N(6)-dimethylallyladenosine(37) in tRNA + (sulfur carrier)-H + 5'-deoxyadenosine + L-methionine + A + S-adenosyl-L-homocysteine + 2 H(+). Catalyzes the methylthiolation of N6-(dimethylallyl)adenosine (i(6)A), leading to the formation of 2-methylthio-N6-(dimethylallyl)adenosine (ms(2)i(6)A) at position 37 in tRNAs that read codons beginning with uridine. This Wolbachia sp. subsp. Brugia malayi (strain TRS) protein is tRNA-2-methylthio-N(6)-dimethylallyladenosine synthase.